The primary structure comprises 277 residues: Thymidylate synthase (277 aa).

Arginine 21 is a dUMP binding site. Histidine 51 is a binding site for (6R)-5,10-methylene-5,6,7,8-tetrahydrofolate. DUMP is bound at residue 126–127; that stretch reads RR. The active-site Nucleophile is the cysteine 159. Residues 179-182, asparagine 190, and 220-222 contribute to the dUMP site; these read RSSD and HAY. Aspartate 182 lines the (6R)-5,10-methylene-5,6,7,8-tetrahydrofolate pocket. Alanine 276 provides a ligand contact to (6R)-5,10-methylene-5,6,7,8-tetrahydrofolate.

This sequence belongs to the thymidylate synthase family. Bacterial-type ThyA subfamily. Homodimer.

It localises to the cytoplasm. It carries out the reaction dUMP + (6R)-5,10-methylene-5,6,7,8-tetrahydrofolate = 7,8-dihydrofolate + dTMP. It functions in the pathway pyrimidine metabolism; dTTP biosynthesis. Catalyzes the reductive methylation of 2'-deoxyuridine-5'-monophosphate (dUMP) to 2'-deoxythymidine-5'-monophosphate (dTMP) while utilizing 5,10-methylenetetrahydrofolate (mTHF) as the methyl donor and reductant in the reaction, yielding dihydrofolate (DHF) as a by-product. This enzymatic reaction provides an intracellular de novo source of dTMP, an essential precursor for DNA biosynthesis. This Pseudomonas fluorescens (strain SBW25) protein is Thymidylate synthase.